The following is a 269-amino-acid chain: UPF0328 protein ECU03_0020 (269 aa).

The protein belongs to the UPF0328 family.

This chain is UPF0328 protein ECU03_0020, found in Encephalitozoon cuniculi (strain GB-M1) (Microsporidian parasite).